The sequence spans 643 residues: Phosphomethylpyrimidine synthase (643 aa).

Residues asparagine 248, methionine 277, tyrosine 306, histidine 342, 362 to 364, 403 to 406, and glutamate 442 contribute to the substrate site; these read SRG and DGLR. A Zn(2+)-binding site is contributed by histidine 446. Position 469 (tyrosine 469) interacts with substrate. A Zn(2+)-binding site is contributed by histidine 510. Positions 590, 593, and 598 each coordinate [4Fe-4S] cluster.

This sequence belongs to the ThiC family. Homodimer. It depends on [4Fe-4S] cluster as a cofactor.

The catalysed reaction is 5-amino-1-(5-phospho-beta-D-ribosyl)imidazole + S-adenosyl-L-methionine = 4-amino-2-methyl-5-(phosphooxymethyl)pyrimidine + CO + 5'-deoxyadenosine + formate + L-methionine + 3 H(+). It participates in cofactor biosynthesis; thiamine diphosphate biosynthesis. Catalyzes the synthesis of the hydroxymethylpyrimidine phosphate (HMP-P) moiety of thiamine from aminoimidazole ribotide (AIR) in a radical S-adenosyl-L-methionine (SAM)-dependent reaction. The chain is Phosphomethylpyrimidine synthase from Burkholderia ambifaria (strain MC40-6).